A 186-amino-acid polypeptide reads, in one-letter code: ATP-dependent protease subunit HslV (186 aa).

The active site involves T14. The Na(+) site is built by A168, C171, and T174.

It belongs to the peptidase T1B family. HslV subfamily. As to quaternary structure, a double ring-shaped homohexamer of HslV is capped on each side by a ring-shaped HslU homohexamer. The assembly of the HslU/HslV complex is dependent on binding of ATP.

It is found in the cytoplasm. It carries out the reaction ATP-dependent cleavage of peptide bonds with broad specificity.. With respect to regulation, allosterically activated by HslU binding. Protease subunit of a proteasome-like degradation complex believed to be a general protein degrading machinery. The sequence is that of ATP-dependent protease subunit HslV from Methylorubrum extorquens (strain CM4 / NCIMB 13688) (Methylobacterium extorquens).